A 732-amino-acid polypeptide reads, in one-letter code: S-adenosyl-L-methionine-dependent tRNA 4-demethylwyosine synthase TYW1 (732 aa).

Residues 79 to 237 (VKIFYGSQTG…DFRAWKTKFI (159 aa)) enclose the Flavodoxin-like domain. Residues 85 to 89 (SQTGT) and 176 to 208 (VFGLGNSAYASHFNKVGKNVDKWLWMLGAHRVM) contribute to the FMN site. The interval 248–314 (RKKSCGGHCK…HQSLNSIVDV (67 aa)) is disordered. The span at 259-286 (GKCESHQHGSEEREEGSHEQDELHHRDT) shows a compositional bias: basic and acidic residues. Residues 287–301 (EEEEPFESSSEEEFG) are compositionally biased toward acidic residues. The Radical SAM core domain maps to 400–644 (YGIESHRCME…VDLIPEYEIA (245 aa)). Residues Cys-416, Cys-420, and Cys-423 each coordinate [4Fe-4S] cluster.

The protein belongs to the TYW1 family. Requires [4Fe-4S] cluster as cofactor.

The catalysed reaction is N(1)-methylguanosine(37) in tRNA(Phe) + pyruvate + S-adenosyl-L-methionine = 4-demethylwyosine(37) in tRNA(Phe) + 5'-deoxyadenosine + L-methionine + CO2 + H2O. The protein operates within tRNA modification; wybutosine-tRNA(Phe) biosynthesis. Its function is as follows. Probable component of the wybutosine biosynthesis pathway. Wybutosine is a hyper modified guanosine with a tricyclic base found at the 3'-position adjacent to the anticodon of eukaryotic phenylalanine tRNA. Catalyzes the condensation of N-methylguanine with 2 carbon atoms from pyruvate to form the tricyclic 4-demethylwyosine, an intermediate in wybutosine biosynthesis. The chain is S-adenosyl-L-methionine-dependent tRNA 4-demethylwyosine synthase TYW1 (TYW1) from Homo sapiens (Human).